The primary structure comprises 175 residues: MDIAIHHPWIRRPFFPFHSPSRLFDQFFGEHLLESDLFSTATSLSPFYLRPPSFLRAPSWIDTGLSEMRMEKDRFSVNLDVKHFSPEELKVKVLGDVIEVHGKHEERQDEHGFISREFHRKYRIPADVDPLTITSSLSSDGVLTVNGPRKQASGPERTIPITREEKPAVTAAPKK.

M1 is subject to N-acetylmethionine. 3 positions are modified to phosphoserine: S19, S45, and S59. The sHSP domain occupies 56-164 (RAPSWIDTGL…PERTIPITRE (109 aa)). H83 is a binding site for Zn(2+). Position 92 is an N6-acetyllysine (K92). Zn(2+) contacts are provided by H104, E106, H111, and H119. A disordered region spans residues 142-175 (VLTVNGPRKQASGPERTIPITREEKPAVTAAPKK). K166 carries the N6-acetyllysine modification. O-linked (GlcNAc) threonine glycosylation is present at T170.

This sequence belongs to the small heat shock protein (HSP20) family. Heteromer composed of three CRYAA and one CRYAB subunits. Aggregates with homologous proteins, including the small heat shock protein HSPB1, to form large heteromeric complexes. Inter-subunit bridging via zinc ions enhances stability, which is crucial as there is no protein turn over in the lens. Interacts with HSPBAP1. Interacts with TTN/titin. Interacts with TMEM109; in the cellular response to DNA damage. Interacts with DES; binds rapidly during early stages of DES filament assembly and a reduced binding seen in the later stages. Interacts with TMED10; the interaction mediates the translocation from the cytoplasm into the ERGIC (endoplasmic reticulum-Golgi intermediate compartment) and thereby secretion. Interacts with ATP6V1A and with MTOR, forming a ternary complex. As to expression, lens as well as other tissues.

The protein localises to the cytoplasm. The protein resides in the nucleus. It is found in the secreted. It localises to the lysosome. May contribute to the transparency and refractive index of the lens. Has chaperone-like activity, preventing aggregation of various proteins under a wide range of stress conditions. In lens epithelial cells, stabilizes the ATP6V1A protein, preventing its degradation by the proteasome. The chain is Alpha-crystallin B chain from Rattus norvegicus (Rat).